The primary structure comprises 36 residues: Photosystem I reaction center subunit VIII (36 aa).

Residues 8 to 28 (SFFVPLVCLVFPAIAMAFLFV) form a helical membrane-spanning segment.

Belongs to the PsaI family.

The protein resides in the plastid. It is found in the chloroplast thylakoid membrane. May help in the organization of the PsaL subunit. The polypeptide is Photosystem I reaction center subunit VIII (Chara vulgaris (Common stonewort)).